Consider the following 869-residue polypeptide: Dynamin-3 (869 aa).

Positions 28–294 (LLELPQIAVV…LTNHIRDTLP (267 aa)) constitute a Dynamin-type G domain. The tract at residues 38 to 45 (GGQSAGKS) is G1 motif. 38 to 46 (GGQSAGKSS) contributes to the GTP binding site. A G2 motif region spans residues 64–66 (VTR). Residues 136-139 (DLPG) are G3 motif. The G4 motif stretch occupies residues 205 to 208 (TKLD). 205–211 (TKLDLMD) is a GTP binding site. Tyr231 is modified (phosphotyrosine). Residues 235 to 238 (VNRS) form a G5 motif region. Residue 236–239 (NRSQ) coordinates GTP. An N6-acetyllysine modification is found at Lys299. Residues 515–621 (QGTNLPPSRQ…ACDSQEDVDS (107 aa)) form the PH domain. Tyr603 bears the Phosphotyrosine mark. Lys604 bears the N6-acetyllysine mark. Residues 659–750 (VETIRNLVDS…IIGDISTATV (92 aa)) enclose the GED domain. The tract at residues 747–869 (TATVSTPAPP…IRPLESSLLD (123 aa)) is disordered. Residues Ser769 and Ser773 each carry the phosphoserine modification. Composition is skewed to pro residues over residues 797 to 822 (PAIP…PPFP) and 832 to 855 (PQVP…PSPT). The residue at position 853 (Ser853) is a Phosphoserine.

Belongs to the TRAFAC class dynamin-like GTPase superfamily. Dynamin/Fzo/YdjA family.

The protein resides in the cytoplasm. It localises to the cytoskeleton. It catalyses the reaction GTP + H2O = GDP + phosphate + H(+). Its function is as follows. Microtubule-associated force-producing protein involved in producing microtubule bundles and able to bind and hydrolyze GTP. Most probably involved in vesicular trafficking processes, in particular endocytosis. This is Dynamin-3 (DNM3) from Homo sapiens (Human).